The following is a 216-amino-acid chain: Octanoyltransferase (216 aa).

The 175-residue stretch at 30–204 folds into the BPL/LPL catalytic domain; it reads KNNINEIWLL…NCKKFLMMNN (175 aa). Substrate is bound by residues 68–75, 135–137, and 148–150; these read RGGHMTFH, SIG, and GLA. The active-site Acyl-thioester intermediate is Cys-166.

The protein belongs to the LipB family.

The protein resides in the cytoplasm. It catalyses the reaction octanoyl-[ACP] + L-lysyl-[protein] = N(6)-octanoyl-L-lysyl-[protein] + holo-[ACP] + H(+). The protein operates within protein modification; protein lipoylation via endogenous pathway; protein N(6)-(lipoyl)lysine from octanoyl-[acyl-carrier-protein]: step 1/2. In terms of biological role, catalyzes the transfer of endogenously produced octanoic acid from octanoyl-acyl-carrier-protein onto the lipoyl domains of lipoate-dependent enzymes. Lipoyl-ACP can also act as a substrate although octanoyl-ACP is likely to be the physiological substrate. The chain is Octanoyltransferase from Wigglesworthia glossinidia brevipalpis.